An 878-amino-acid chain; its full sequence is Phosphoenolpyruvate carboxylase (878 aa).

Residues His137 and Lys545 contribute to the active site.

This sequence belongs to the PEPCase type 1 family. Mg(2+) serves as cofactor.

The catalysed reaction is oxaloacetate + phosphate = phosphoenolpyruvate + hydrogencarbonate. In terms of biological role, forms oxaloacetate, a four-carbon dicarboxylic acid source for the tricarboxylic acid cycle. In Yersinia pestis bv. Antiqua (strain Antiqua), this protein is Phosphoenolpyruvate carboxylase.